Reading from the N-terminus, the 438-residue chain is UDP-N-acetylmuramoylalanine--D-glutamate ligase (438 aa).

Residue 112–118 coordinates ATP; the sequence is GSNGKST.

This sequence belongs to the MurCDEF family.

It localises to the cytoplasm. It catalyses the reaction UDP-N-acetyl-alpha-D-muramoyl-L-alanine + D-glutamate + ATP = UDP-N-acetyl-alpha-D-muramoyl-L-alanyl-D-glutamate + ADP + phosphate + H(+). It functions in the pathway cell wall biogenesis; peptidoglycan biosynthesis. Functionally, cell wall formation. Catalyzes the addition of glutamate to the nucleotide precursor UDP-N-acetylmuramoyl-L-alanine (UMA). The protein is UDP-N-acetylmuramoylalanine--D-glutamate ligase of Yersinia pestis bv. Antiqua (strain Antiqua).